The chain runs to 208 residues: NAD(P)H-quinone oxidoreductase subunit I (208 aa).

2 consecutive 4Fe-4S ferredoxin-type domains span residues 55-84 (GRIH…VDWV) and 95-124 (RNYS…MTEE). [4Fe-4S] cluster contacts are provided by Cys64, Cys67, Cys70, Cys74, Cys104, Cys107, Cys110, and Cys114.

Belongs to the complex I 23 kDa subunit family. As to quaternary structure, NDH-1 is composed of at least 11 different subunits. [4Fe-4S] cluster serves as cofactor.

The protein localises to the cellular thylakoid membrane. It catalyses the reaction a plastoquinone + NADH + (n+1) H(+)(in) = a plastoquinol + NAD(+) + n H(+)(out). It carries out the reaction a plastoquinone + NADPH + (n+1) H(+)(in) = a plastoquinol + NADP(+) + n H(+)(out). NDH-1 shuttles electrons from an unknown electron donor, via FMN and iron-sulfur (Fe-S) centers, to quinones in the respiratory and/or the photosynthetic chain. The immediate electron acceptor for the enzyme in this species is believed to be plastoquinone. Couples the redox reaction to proton translocation, and thus conserves the redox energy in a proton gradient. The polypeptide is NAD(P)H-quinone oxidoreductase subunit I (Prochlorococcus marinus (strain MIT 9515)).